Consider the following 354-residue polypeptide: Holliday junction branch migration complex subunit RuvB (354 aa).

A large ATPase domain (RuvB-L) region spans residues 1 to 183; the sequence is MTGDNLVSAY…FGFVAHLDFY (183 aa). ATP is bound by residues Arg-23, Gly-64, Lys-67, Thr-68, Ser-69, 130–132, Arg-173, Tyr-183, and Arg-220; that span reads EDF. Thr-68 contacts Mg(2+). The small ATPAse domain (RuvB-S) stretch occupies residues 184-254; that stretch reads SPADLETLLH…AARAALLVYD (71 aa). The head domain (RuvB-H) stretch occupies residues 257-354; that stretch reads ALGLDRLDRQ…DLFSVEPDQP (98 aa). 2 residues coordinate DNA: Arg-312 and Arg-317. Residues 330 to 354 form a disordered region; the sequence is TPPNGIFGSDAPPASDLFSVEPDQP.

It belongs to the RuvB family. Homohexamer. Forms an RuvA(8)-RuvB(12)-Holliday junction (HJ) complex. HJ DNA is sandwiched between 2 RuvA tetramers; dsDNA enters through RuvA and exits via RuvB. An RuvB hexamer assembles on each DNA strand where it exits the tetramer. Each RuvB hexamer is contacted by two RuvA subunits (via domain III) on 2 adjacent RuvB subunits; this complex drives branch migration. In the full resolvosome a probable DNA-RuvA(4)-RuvB(12)-RuvC(2) complex forms which resolves the HJ.

Its subcellular location is the cytoplasm. The enzyme catalyses ATP + H2O = ADP + phosphate + H(+). Functionally, the RuvA-RuvB-RuvC complex processes Holliday junction (HJ) DNA during genetic recombination and DNA repair, while the RuvA-RuvB complex plays an important role in the rescue of blocked DNA replication forks via replication fork reversal (RFR). RuvA specifically binds to HJ cruciform DNA, conferring on it an open structure. The RuvB hexamer acts as an ATP-dependent pump, pulling dsDNA into and through the RuvAB complex. RuvB forms 2 homohexamers on either side of HJ DNA bound by 1 or 2 RuvA tetramers; 4 subunits per hexamer contact DNA at a time. Coordinated motions by a converter formed by DNA-disengaged RuvB subunits stimulates ATP hydrolysis and nucleotide exchange. Immobilization of the converter enables RuvB to convert the ATP-contained energy into a lever motion, pulling 2 nucleotides of DNA out of the RuvA tetramer per ATP hydrolyzed, thus driving DNA branch migration. The RuvB motors rotate together with the DNA substrate, which together with the progressing nucleotide cycle form the mechanistic basis for DNA recombination by continuous HJ branch migration. Branch migration allows RuvC to scan DNA until it finds its consensus sequence, where it cleaves and resolves cruciform DNA. This chain is Holliday junction branch migration complex subunit RuvB, found in Salinispora arenicola (strain CNS-205).